Consider the following 365-residue polypeptide: Caffeic acid 3-O-methyltransferase (365 aa).

130–136 (MNQDKVL) provides a ligand contact to substrate. The segment at 162 to 180 (AFEYHGTDPRFNKVFNRGM) is substrate binding. Residues G208, D231, D251, M252, and K265 each coordinate S-adenosyl-L-methionine. H269 functions as the Proton acceptor in the catalytic mechanism.

It belongs to the class I-like SAM-binding methyltransferase superfamily. Cation-independent O-methyltransferase family. COMT subfamily. As to quaternary structure, homodimer.

It carries out the reaction (E)-caffeate + S-adenosyl-L-methionine = (E)-ferulate + S-adenosyl-L-homocysteine + H(+). It functions in the pathway aromatic compound metabolism; phenylpropanoid biosynthesis. Its function is as follows. Catalyzes the conversion of caffeic acid to ferulic acid and of 5-hydroxyferulic acid to sinapic acid. The resulting products may subsequently be converted to the corresponding alcohols that are incorporated into lignins. This is Caffeic acid 3-O-methyltransferase (COMT1) from Prunus dulcis (Almond).